The sequence spans 412 residues: GTPase Obg (412 aa).

Positions 1–159 (MKFLDQAKIF…RWIWLRLKMI (159 aa)) constitute an Obg domain. In terms of domain architecture, OBG-type G spans 160 to 327 (ADAGLVGLPN…ILARLFTHIR (168 aa)). GTP is bound by residues 166 to 173 (GLPNAGKS), 191 to 195 (FTTLH), 212 to 215 (DIPG), 279 to 282 (NKCD), and 308 to 310 (SGV). Residues S173 and T193 each coordinate Mg(2+). The tract at residues 335–412 (AVPAASPIFG…ADDEEDDAEE (78 aa)) is disordered. A compositionally biased stretch (acidic residues) spans 385 to 412 (NDGDEVDEDYDDEDLEEVADDEEDDAEE).

Belongs to the TRAFAC class OBG-HflX-like GTPase superfamily. OBG GTPase family. In terms of assembly, monomer. Mg(2+) serves as cofactor.

The protein resides in the cytoplasm. Its function is as follows. An essential GTPase which binds GTP, GDP and possibly (p)ppGpp with moderate affinity, with high nucleotide exchange rates and a fairly low GTP hydrolysis rate. Plays a role in control of the cell cycle, stress response, ribosome biogenesis and in those bacteria that undergo differentiation, in morphogenesis control. This is GTPase Obg from Paramagnetospirillum magneticum (strain ATCC 700264 / AMB-1) (Magnetospirillum magneticum).